Reading from the N-terminus, the 466-residue chain is Oryzain beta chain (466 aa).

The signal sequence occupies residues 1 to 21 (MAARAAAAAFLLLLIVGAATA). Residues 22–140 (APDMSIISYN…ERYRHDGVEE (119 aa)) constitute a propeptide, activation peptide. Intrachain disulfides connect Cys162/Cys205, Cys196/Cys238, and Cys296/Cys347. Cys165 is a catalytic residue. Catalysis depends on residues His302 and Asn322. Residue Asn341 is glycosylated (N-linked (GlcNAc...) asparagine). Positions 358 to 380 (KSGANPPKPSPTPPTPPTPPPPS) are disordered. A propeptide spans 362–466 (NPPKPSPTPP…KRTLAKLNTA (105 aa)) (removed in mature form). Over residues 363–380 (PPKPSPTPPTPPTPPPPS) the composition is skewed to pro residues. Cystine bridges form between Cys386-Cys398 and Cys392-Cys413. Asn389 carries an N-linked (GlcNAc...) asparagine glycan.

This sequence belongs to the peptidase C1 family. Expressed only in seeds.

Probable thiol protease. The polypeptide is Oryzain beta chain (Oryza sativa subsp. japonica (Rice)).